Here is a 109-residue protein sequence, read N- to C-terminus: MTNITSSFLCLLILLLFCLSFGYSLHGDKDEVLSVDVGSNAKVMKHLDGDDAMKKAQVRGRSGQEFSKETTKMMMKKTTKKETNVEEEDDLVAYTADYWKPRHHPPKNN.

Positions 1-24 (MTNITSSFLCLLILLLFCLSFGYS) are cleaved as a signal peptide. Positions 25–96 (LHGDKDEVLS…EEDDLVAYTA (72 aa)) are excised as a propeptide. Residues 54 to 88 (KKAQVRGRSGQEFSKETTKMMMKKTTKKETNVEEE) are disordered. Tyr-98 is modified (sulfotyrosine). At Pro-106 the chain carries Hydroxyproline.

The protein belongs to the RGF family. As to quaternary structure, binds to LRR receptor-like serine/threonine-protein kinases RGI1, RGI2 and RGI3 to trigger their dimerization with SERK proteins and subsequent signaling. In terms of tissue distribution, expressed in root tips.

The protein resides in the secreted. In terms of biological role, signaling peptide (root growth factor) that maintains the postembryonic root stem cell niche in a PIN2-traffic dependent manner. Root growth factor that regulates the pattern of root growth and lateral root development by modulating the length and the number of cortical cells in the root apical meristem (RAM), and the anticlinal asymmetric cell divisions in lateral root initiation cells. Influences the longitudinal growth rate in the primary root in response to phosphate ion (Pi)-deprivation. This chain is Protein GOLVEN 5, found in Arabidopsis thaliana (Mouse-ear cress).